The following is a 532-amino-acid chain: Probable alpha-galactosidase A (532 aa).

The first 21 residues, 1-21 (MDTTKSLLSTLIAIMIPLSLG), serve as a signal peptide directing secretion. A disulfide bridge links C44 with C76. Residues N47, N91, and N121 are each glycosylated (N-linked (GlcNAc...) asparagine). C124 and C154 are disulfide-bonded. The active-site Nucleophile is the D152. N-linked (GlcNAc...) asparagine glycosylation is present at N201. D210 acts as the Proton donor in catalysis. A Ricin B-type lectin domain is found at 410 to 531 (CSTVIPTGIV…GLPSGVDIKP (122 aa)). Cystine bridges form between C427–C441 and C466–C478.

It belongs to the glycosyl hydrolase 27 family.

The protein localises to the secreted. It catalyses the reaction Hydrolysis of terminal, non-reducing alpha-D-galactose residues in alpha-D-galactosides, including galactose oligosaccharides, galactomannans and galactolipids.. Functionally, hydrolyzes a variety of simple alpha-D-galactoside as well as more complex molecules such as oligosaccharides and polysaccharides. The polypeptide is Probable alpha-galactosidase A (aglA) (Aspergillus fumigatus (strain ATCC MYA-4609 / CBS 101355 / FGSC A1100 / Af293) (Neosartorya fumigata)).